We begin with the raw amino-acid sequence, 538 residues long: CWF19-like protein 1 (538 aa).

Residues 298 to 324 (QGRKRSSTGRDSKSSPHPKQPRKPPQP) form a disordered region.

The protein belongs to the CWF19 family. As to expression, expressed in many brain regions, including cerebellum, thalamus and occipital, parietal and temporal lobes (at protein level). Also expressed in the spinal cord (at protein level).

This Homo sapiens (Human) protein is CWF19-like protein 1 (CWF19L1).